Consider the following 620-residue polypeptide: Chaperone protein HtpG (620 aa).

Residues 1 to 339 (MAKHQFQTEI…SEDLPLNVSR (339 aa)) are a; substrate-binding. Positions 340–546 (ELLQENRILA…ASDPMAGMAA (207 aa)) are b. The interval 547-620 (MFAQMGQEMP…RVASLATKAL (74 aa)) is c.

Belongs to the heat shock protein 90 family. In terms of assembly, homodimer.

The protein localises to the cytoplasm. Its function is as follows. Molecular chaperone. Has ATPase activity. This chain is Chaperone protein HtpG, found in Sulfurovum sp. (strain NBC37-1).